The primary structure comprises 107 residues: BolA-like protein 3 (107 aa).

This sequence belongs to the BolA/IbaG family. In terms of assembly, interacts with NFU1. In terms of tissue distribution, widely expressed.

The protein resides in the mitochondrion. Its function is as follows. Acts as a mitochondrial iron-sulfur (Fe-S) cluster assembly factor that facilitates (Fe-S) cluster insertion into a subset of mitochondrial proteins. Probably acts together with NFU1. In Homo sapiens (Human), this protein is BolA-like protein 3.